We begin with the raw amino-acid sequence, 562 residues long: MAAKQIVFSRGARAAILKGVNTLADAVKVTLGPKGRNVVIEKSWGSPVVTKDGVTVAKEVELAGKLENMGAQMVREVASKTSDKAGDGTTTATVLAQAIFGEGLKLVEAGHNPMDLKRGIDAAVAKVIEAVQKAAKPTKDKDQIAQVATVSANGDKEIGQILADAMEKVGKEGVITVEENKRMTTELETVDGMQFDRGYLSPYFVTDPEKMTAVLTNPLILVHEKKISAMADLLPLLEQVVKQGRELLILSEDVEGEALATLVVNKLRGTIKVAAVKAPGFGDRRKDMLKDIAILTGATPFMEDLGQKLESATVRDLGTAKRVEIDKDNTVIVDGQGDKTAIKGRIEAIRKQIADTTSDYDREKLQERLAKLAGGVAVVKVGAATETEMKEKKARVEDALHATRAAVEEGIVVGGGVALFRAAASLESLKFNDERDVGVRLVRRAVEAPLRQIAQNAGVDGTVVAEKVRSGAPTFGYNAATDSYEDLLAGGVIDPAKVVRHAISNAASVAALMLTTEALVAEKPKKEKAAAGGAPGGMGGMGGMGGMGGMGGMGGMGDFDMG.

Residues 30 to 33, Lys51, 87 to 91, Gly415, 478 to 480, and Asp494 each bind ATP; these read TLGP, DGTTT, and NAA.

The protein belongs to the chaperonin (HSP60) family. In terms of assembly, forms a cylinder of 14 subunits composed of two heptameric rings stacked back-to-back. Interacts with the co-chaperonin GroES.

It localises to the cytoplasm. The enzyme catalyses ATP + H2O + a folded polypeptide = ADP + phosphate + an unfolded polypeptide.. Together with its co-chaperonin GroES, plays an essential role in assisting protein folding. The GroEL-GroES system forms a nano-cage that allows encapsulation of the non-native substrate proteins and provides a physical environment optimized to promote and accelerate protein folding. This is Chaperonin GroEL 1 from Sorangium cellulosum (strain So ce56) (Polyangium cellulosum (strain So ce56)).